The primary structure comprises 460 residues: Cysteine--tRNA ligase (460 aa).

Zn(2+) is bound at residue C28. Positions 30 to 40 (MTVYDYCHLGH) match the 'HIGH' region motif. Zn(2+) contacts are provided by C209, H234, and E238. Positions 266 to 270 (KMSKS) match the 'KMSKS' region motif. K269 is an ATP binding site.

This sequence belongs to the class-I aminoacyl-tRNA synthetase family. As to quaternary structure, monomer. Zn(2+) is required as a cofactor.

It localises to the cytoplasm. It carries out the reaction tRNA(Cys) + L-cysteine + ATP = L-cysteinyl-tRNA(Cys) + AMP + diphosphate. This chain is Cysteine--tRNA ligase, found in Pseudomonas paraeruginosa (strain DSM 24068 / PA7) (Pseudomonas aeruginosa (strain PA7)).